The primary structure comprises 320 residues: Zygote arrest protein 1 (320 aa).

2 disordered regions span residues 106-130 (ELRR…EVRY) and 155-208 (DRPA…AEGS). A 3CxxC-type zinc finger spans residues 222–305 (KYGYYHCREC…RQDLCGRCKG (84 aa)).

This sequence belongs to the ZAR1 family.

The protein localises to the cytoplasm. Its subcellular location is the cytoplasmic ribonucleoprotein granule. Its function is as follows. mRNA-binding protein required for maternal mRNA storage, translation and degradation during oocyte maturation. Probably promotes formation of some phase-separated membraneless compartment that stores maternal mRNAs in oocytes: acts by undergoing liquid-liquid phase separation upon binding to maternal mRNAs. Binds to the 3'-UTR of maternal mRNAs, inhibiting their translation. The chain is Zygote arrest protein 1 from Takifugu rubripes (Japanese pufferfish).